A 526-amino-acid polypeptide reads, in one-letter code: ESX-1 secretion-associated protein EspB (526 aa).

A compositionally biased stretch (basic and acidic residues) spans 1 to 23; it reads MSEELKYELPGLERKAHECESTR. 3 disordered regions span residues 1-35, 91-110, and 271-526; these read MSEE…KPDE, RQMN…VPDM, and QIQE…GKQQ. A compositionally biased stretch (gly residues) spans 303–328; sequence GGPGGPGSGSGGGSGGGASGGSGGGT. Residues 335 to 362 are compositionally biased toward low complexity; it reads PSTDPSMSPMSTNSAGEEQSSGSPSSGG. A compositionally biased stretch (gly residues) spans 363–387; it reads SSSGGSPSGGSPSGGGAPSSGGMPE. Low complexity predominate over residues 393-405; it reads DMPGGPDIPGLDD. Residues 413–429 show a composition bias toward gly residues; it reads AGGGGGGGVGGGGGGGM. Low complexity predominate over residues 430 to 440; it reads PAAPLGPAVGA. The segment covering 451–484 has biased composition (gly residues); it reads RGGGVGVPTGTGGGAGGMMGGGMGGMGAGHGQGQ. The span at 485 to 508 shows a compositional bias: basic and acidic residues; that stretch reads GKEKKRDPKLAPDEDLYTEDRAHS.

This sequence belongs to the EspB family.

It localises to the secreted. In terms of biological role, involved in DNA conjugation, at least in the recipient strain. This Mycolicibacterium smegmatis (strain MKD8) (Mycobacterium smegmatis) protein is ESX-1 secretion-associated protein EspB.